A 363-amino-acid chain; its full sequence is Cytoplasmic envelopment protein 2 (363 aa).

The protein belongs to the herpesviridae cytoplasmic envelopment protein 2 family. Interacts with cytoplasmic envelopment protein 3 and with the capsid.

It is found in the virion tegument. The protein localises to the host cytoplasm. The protein resides in the host nucleus. Its function is as follows. Plays a critical role in cytoplasmic virus egress. Participates in the final step of tegumentation and envelope acquisition within the host cytoplasm by directly interacting with the capsid. Upon virion binding to target cell, a signaling cascade is triggered to disrupt the interaction with the capsid, thereby preparing capsid uncoating. This is Cytoplasmic envelopment protein 2 (44) from Varicella-zoster virus (strain Dumas) (HHV-3).